The chain runs to 116 residues: Large ribosomal subunit protein bL19 (116 aa).

This sequence belongs to the bacterial ribosomal protein bL19 family.

In terms of biological role, this protein is located at the 30S-50S ribosomal subunit interface and may play a role in the structure and function of the aminoacyl-tRNA binding site. The polypeptide is Large ribosomal subunit protein bL19 (Magnetococcus marinus (strain ATCC BAA-1437 / JCM 17883 / MC-1)).